The chain runs to 210 residues: Peptidyl-tRNA hydrolase (210 aa).

Tyr30 lines the tRNA pocket. The active-site Proton acceptor is the His35. Residues Tyr81, Asn83, and Asn129 each contribute to the tRNA site.

The protein belongs to the PTH family. As to quaternary structure, monomer.

It is found in the cytoplasm. The catalysed reaction is an N-acyl-L-alpha-aminoacyl-tRNA + H2O = an N-acyl-L-amino acid + a tRNA + H(+). In terms of biological role, hydrolyzes ribosome-free peptidyl-tRNAs (with 1 or more amino acids incorporated), which drop off the ribosome during protein synthesis, or as a result of ribosome stalling. Catalyzes the release of premature peptidyl moieties from peptidyl-tRNA molecules trapped in stalled 50S ribosomal subunits, and thus maintains levels of free tRNAs and 50S ribosomes. This Bordetella petrii (strain ATCC BAA-461 / DSM 12804 / CCUG 43448) protein is Peptidyl-tRNA hydrolase.